Here is a 229-residue protein sequence, read N- to C-terminus: MIDHTHLRLFQFCDSQFPTGAFSHSFGLETYIQRNIIHDDHTFIAWLKMFLQEQLTYSDGLAMRLVYDALENDDTQKVLHIDKLMFVQNLPKETRVGAKQMGTRMVKLALELYNSPWIAWYHQQMQDKKAKLNPAICFTMLGHHLGVDIETIIDYYLYQNVSSLTQNAVRAIPLGQTAGQKIVTHMIPYIEGTRKQIFELKEADFGMTAPGLELNQMAHENVNVRIFIS.

This sequence belongs to the UreF family. UreD, UreF and UreG form a complex that acts as a GTP-hydrolysis-dependent molecular chaperone, activating the urease apoprotein by helping to assemble the nickel containing metallocenter of UreC. The UreE protein probably delivers the nickel.

It localises to the cytoplasm. Functionally, required for maturation of urease via the functional incorporation of the urease nickel metallocenter. This is Urease accessory protein UreF from Staphylococcus aureus (strain USA300).